The following is a 210-amino-acid chain: Pyridoxine/pyridoxamine 5'-phosphate oxidase (210 aa).

Substrate is bound by residues 7–10 (RQSY) and K65. FMN contacts are provided by residues 60–65 (RIVLIK), 75–76 (YT), R81, K82, and Q104. Residues Y122, R126, and S130 each contribute to the substrate site. FMN-binding positions include 139-140 (QS) and W182. A substrate-binding site is contributed by 188 to 190 (RLH). R192 is a binding site for FMN.

Belongs to the pyridoxamine 5'-phosphate oxidase family. As to quaternary structure, homodimer. Requires FMN as cofactor.

The enzyme catalyses pyridoxamine 5'-phosphate + O2 + H2O = pyridoxal 5'-phosphate + H2O2 + NH4(+). It carries out the reaction pyridoxine 5'-phosphate + O2 = pyridoxal 5'-phosphate + H2O2. It participates in cofactor metabolism; pyridoxal 5'-phosphate salvage; pyridoxal 5'-phosphate from pyridoxamine 5'-phosphate: step 1/1. It functions in the pathway cofactor metabolism; pyridoxal 5'-phosphate salvage; pyridoxal 5'-phosphate from pyridoxine 5'-phosphate: step 1/1. Catalyzes the oxidation of either pyridoxine 5'-phosphate (PNP) or pyridoxamine 5'-phosphate (PMP) into pyridoxal 5'-phosphate (PLP). The protein is Pyridoxine/pyridoxamine 5'-phosphate oxidase of Bordetella petrii (strain ATCC BAA-461 / DSM 12804 / CCUG 43448).